Consider the following 242-residue polypeptide: Beta-carotene ketolase (242 aa).

The catalysed reaction is all-trans-beta-carotene + 2 AH2 + 2 O2 = echinenone + 2 A + 3 H2O. The enzyme catalyses echinenone + 2 AH2 + 2 O2 = canthaxanthin + 2 A + 3 H2O. It participates in carotenoid biosynthesis; astaxanthin biosynthesis. Converts beta-carotene to canthaxanthin via echinenone. This chain is Beta-carotene ketolase, found in Paracoccus sp. (strain PC1) (Alcaligenes sp. (strain PC1)).